The sequence spans 727 residues: Glycerol-3-phosphate dehydrogenase, mitochondrial (727 aa).

A mitochondrion-targeting transit peptide spans 1 to 42; it reads MAFQKAVKGTILVGGGALATVLGLSHFAHYKRKQVNLAFVEA. 71 to 99 is an FAD binding site; the sequence is DVLVIGGGATGSGCALDAVTRGLKTALVE. A Phosphotyrosine modification is found at Tyr601. 2 consecutive EF-hand domains span residues 623–658 and 659–694; these read SDID…IGVQ and MDEN…IQKG. Asp672, Asn674, Asn676, Gln678, and Glu683 together coordinate Ca(2+).

This sequence belongs to the FAD-dependent glycerol-3-phosphate dehydrogenase family. Requires FAD as cofactor.

The protein resides in the mitochondrion. It carries out the reaction a quinone + sn-glycerol 3-phosphate = dihydroxyacetone phosphate + a quinol. Its pathway is polyol metabolism; glycerol degradation via glycerol kinase pathway; glycerone phosphate from sn-glycerol 3-phosphate (aerobic route): step 1/1. Calcium-binding enhance the activity of the enzyme. In terms of biological role, calcium-responsive mitochondrial glycerol-3-phosphate dehydrogenase which seems to be a key component of the pancreatic beta-cell glucose-sensing device. The polypeptide is Glycerol-3-phosphate dehydrogenase, mitochondrial (GPD2) (Bos taurus (Bovine)).